The primary structure comprises 92 residues: Small ribosomal subunit protein uS19c (92 aa).

The protein belongs to the universal ribosomal protein uS19 family.

It localises to the plastid. It is found in the chloroplast. Its function is as follows. Protein S19 forms a complex with S13 that binds strongly to the 16S ribosomal RNA. In Nymphaea alba (White water-lily), this protein is Small ribosomal subunit protein uS19c.